We begin with the raw amino-acid sequence, 727 residues long: Glucans biosynthesis glucosyltransferase H (727 aa).

The tract at residues 18–43 (SAMPNERPGAMEPQSLSQMPEGFPRR) is disordered. A run of 7 helical transmembrane segments spans residues 58–78 (FFVV…MGAV), 94–114 (LFAI…AGFF), 278–298 (LQQF…GWWV), 408–428 (IMAY…LMLA), 460–480 (LFYI…LLLL), 496–516 (ILSV…MMFI), and 572–592 (LLAW…ISAW).

Belongs to the glycosyltransferase 2 family. OpgH subfamily.

It localises to the cell inner membrane. Its pathway is glycan metabolism; osmoregulated periplasmic glucan (OPG) biosynthesis. Its function is as follows. Involved in the biosynthesis of osmoregulated periplasmic glucans (OPGs). This is Glucans biosynthesis glucosyltransferase H from Shewanella sp. (strain ANA-3).